The chain runs to 232 residues: 5'-methylthioadenosine/S-adenosylhomocysteine nucleosidase (232 aa).

The active-site Proton acceptor is the glutamate 12. Residues glycine 78, isoleucine 152, and 173–174 contribute to the substrate site; that span reads ME. Aspartate 197 functions as the Proton donor in the catalytic mechanism.

Belongs to the PNP/UDP phosphorylase family. MtnN subfamily. In terms of assembly, homodimer.

It carries out the reaction S-adenosyl-L-homocysteine + H2O = S-(5-deoxy-D-ribos-5-yl)-L-homocysteine + adenine. It catalyses the reaction S-methyl-5'-thioadenosine + H2O = 5-(methylsulfanyl)-D-ribose + adenine. The enzyme catalyses 5'-deoxyadenosine + H2O = 5-deoxy-D-ribose + adenine. It participates in amino-acid biosynthesis; L-methionine biosynthesis via salvage pathway; S-methyl-5-thio-alpha-D-ribose 1-phosphate from S-methyl-5'-thioadenosine (hydrolase route): step 1/2. Its function is as follows. Catalyzes the irreversible cleavage of the glycosidic bond in both 5'-methylthioadenosine (MTA) and S-adenosylhomocysteine (SAH/AdoHcy) to adenine and the corresponding thioribose, 5'-methylthioribose and S-ribosylhomocysteine, respectively. Also cleaves 5'-deoxyadenosine, a toxic by-product of radical S-adenosylmethionine (SAM) enzymes, into 5-deoxyribose and adenine. Thus, is required for in vivo function of the radical SAM enzymes biotin synthase and lipoic acid synthase, that are inhibited by 5'-deoxyadenosine accumulation. In Salmonella dublin (strain CT_02021853), this protein is 5'-methylthioadenosine/S-adenosylhomocysteine nucleosidase.